Here is a 365-residue protein sequence, read N- to C-terminus: H-2 class I histocompatibility antigen, D-D alpha chain (365 aa).

Positions 1–24 are cleaved as a signal peptide; sequence MGAMAPRTLLLLLAAALGPTQTRA. The interval 25-114 is alpha-1; that stretch reads GSHSLRYFVT…ALRYYNQSAG (90 aa). The Extracellular portion of the chain corresponds to 25–311; it reads GSHSLRYFVT…EPPSSTKTNT (287 aa). N-linked (GlcNAc...) asparagine glycosylation is present at N110. The tract at residues 115–206 is alpha-2; it reads GSHTLQWMAG…KNGNATLLRT (92 aa). C125 and C188 are joined by a disulfide. N-linked (GlcNAc...) asparagine glycosylation occurs at N200. The tract at residues 207 to 298 is alpha-3; it reads DPPKAHVTHH…GLPEPLTLRW (92 aa). The Ig-like C1-type domain occupies 209 to 297; it reads PKAHVTHHRR…EGLPEPLTLR (89 aa). Cysteines 227 and 283 form a disulfide. The interval 299-311 is connecting peptide; it reads GKEEPPSSTKTNT. The chain crosses the membrane as a helical span at residues 312–334; the sequence is VIIAVPVVLGAVVILGAVMAFVM. At 335-365 the chain is on the cytoplasmic side; it reads KRRRNTGGKGGDYALAPGSQSSDMSLPDCKV. The segment at 343-365 is disordered; it reads KGGDYALAPGSQSSDMSLPDCKV. Phosphoserine is present on residues S356 and S359.

This sequence belongs to the MHC class I family. In terms of assembly, heterodimer of an alpha chain and a beta chain (beta-2-microglobulin).

It is found in the membrane. Involved in the presentation of foreign antigens to the immune system. The chain is H-2 class I histocompatibility antigen, D-D alpha chain (H2-D1) from Mus musculus (Mouse).